Here is a 374-residue protein sequence, read N- to C-terminus: UPF0496 protein At4g34320 (374 aa).

2 consecutive transmembrane segments (helical) span residues 215 to 235 and 238 to 258; these read IIFV…AAMA and PVAA…GKWI.

It belongs to the UPF0496 family.

It localises to the membrane. The polypeptide is UPF0496 protein At4g34320 (Arabidopsis thaliana (Mouse-ear cress)).